A 693-amino-acid chain; its full sequence is MATSGANGPGSATASASNPRKFSEKIALQKQRQAEETAAFEEVMMDIGSTRLQAQKLRLAYTRSSHYGGSLPNVNQIGSGLAEFQSPLHSPLDSSRSTRHHGLVERVQRDPRRMVSPLRRYTRHIDSSPYSPAYLSPPPESSWRRTMAWGNFPAEKGQLFRLPSALNRTSSDSALHTSVMNPSPQDTYPGPTPPSILPSRRGGILDGEMDPKVPAIEENLLDDKHLLKPWDAKKLSSSSSRPRSCEVPGINIFPSPDQPANVPVLPPAMNTGGSLPDLTNLHFPPPLPTPLDPEETAYPSLSGGNSTSNLTHTMTHLGISRGMGLGPGYDAPGLHSPLSHPSLQSSLSNPNLQASLSSPQPQLQGSHSHPSLPASSLARHVLPTTSLGHPSLSAPALSSSSSSSSTSSPVLGAPSYPASTPGASPHHRRVPLSPLSLLAGPADARRSQQQLPKQFSPTMSPTLSSITQGVPLDTSKLSTDQRLPPYPYSSPSLVLPTQPHTPKSLQQPGLPSQSCSVQSSGGQPPGRQSHYGTPYPPGPSGHGQQSYHRPMSDFNLGNLEQFSMESPSASLVLDPPGFSEGPGFLGGEGPMGGPQDPHTFNHQNLTHCSRHGSGPNIILTGDSSPGFSKEIAAALAGVPGFEVSAAGLELGLGLEDELRMEPLGLEGLNMLSDPCALLPDPAVEESFRSDRLQ.

Polar residues predominate over residues 1 to 20 (MATSGANGPGSATASASNPR). A disordered region spans residues 1–30 (MATSGANGPGSATASASNPRKFSEKIALQK). Position 2 is an N-acetylalanine (A2). R51 is modified (asymmetric dimethylarginine; by PRMT6). 3 positions are modified to phosphoserine: S70, S86, and S90. An asymmetric dimethylarginine; by PRMT6 mark is found at R99, R120, and R123. A Phosphoserine modification is found at S136. 2 positions are modified to asymmetric dimethylarginine; by PRMT6: R161 and R168. T169 carries the phosphothreonine modification. S171 carries the phosphoserine; by AMPK, MARK2, SIK1 and SIK2 modification. T192 is subject to Phosphothreonine. K234 participates in a covalent cross-link: Glycyl lysine isopeptide (Lys-Gly) (interchain with G-Cter in SUMO2). Residues 271–287 (TGGSLPDLTNLHFPPPL) carry the Nuclear export signal motif. S274 carries the post-translational modification Phosphoserine; by MARK2. 2 disordered regions span residues 282-306 (HFPP…GGNS) and 328-554 (GYDA…MSDF). S306, S368, S393, S433, and S456 each carry phosphoserine. 2 stretches are compositionally biased toward low complexity: residues 331–378 (APGL…SSLA) and 386–415 (SLGH…GAPS). Residues 447–468 (SQQQLPKQFSPTMSPTLSSITQ) show a composition bias toward polar residues. Y488 carries the post-translational modification Phosphotyrosine. Phosphoserine is present on residues S489, S490, and S492. Residues 498-507 (QPHTPKSLQQ) are compositionally biased toward polar residues. The residue at position 501 (T501) is a Phosphothreonine. Low complexity predominate over residues 509 to 529 (GLPSQSCSVQSSGGQPPGRQS). S613, S623, and S624 each carry phosphoserine.

Belongs to the TORC family. In terms of assembly, binds, as a tetramer, through its N-terminal region, with the bZIP domain of CREB1. 'Arg-314' in the bZIP domain of CREB1 is essential for this interaction. Interaction, via its C-terminal, with TAF4, enhances recruitment of TAF4 to CREB1. Interacts with SIK2. Interacts with 14-3-3 proteins, YWHAB and YWHAG. Interacts (probably when phosphorylated at Ser-171) with YWHAE. Interacts with calmodulin-dependent catalytic subunit PPP3CA/calcineurin A. Interaction with COP1 mediates nuclear export and degradation of CRTC2. (Microbial infection) Interaction with the human T-cell leukemia virus type 1 (HTLV-1) Tax protein is essential for optimal transcription activation by Tax. Post-translationally, phosphorylation/dephosphorylation states of Ser-171 are required for regulating transduction of CREB activity. CRTCs/TORCs are inactive when phosphorylated, and active when dephosphorylated at this site. This primary site of phosphorylation, is regulated by cAMP and calcium levels and is dependent on the phosphorylation of SIKs (SIK1 and SIK2) by LKB1. Following adenylyl cyclase activation, dephosphorylated at Ser-171 by PPP3CA/calcineurin A resulting in CRTC2 dissociation from 14-3-3 proteins and PPP3CA. Both insulin and AMPK increase this phosphorylation of CRTC2 while glucagon suppresses it. Phosphorylation at Ser-274 by MARK2 is induced under low glucose conditions and dephosphorylated in response to glucose influx. Phosphorylation at Ser-274 promotes interaction with 14-3-3 proteins and translocation to the cytoplasm. Asymmetric dimethylation of arginine resisues by PRMT6 enhances the association of CRTC2 with CREB on the promoters of gluconeogenic genes. In terms of tissue distribution, most abundantly expressed in the thymus. Present in both B and T-lymphocytes. Highly expressed in HEK293T cells and in insulinomas. High levels also in spleen, ovary, muscle and lung, with highest levels in muscle. Lower levels found in brain, colon, heart, kidney, prostate, small intestine and stomach. Weak expression in liver and pancreas.

The protein localises to the cytoplasm. It localises to the nucleus. Functionally, transcriptional coactivator for CREB1 which activates transcription through both consensus and variant cAMP response element (CRE) sites. Acts as a coactivator, in the SIK/TORC signaling pathway, being active when dephosphorylated and acts independently of CREB1 'Ser-133' phosphorylation. Enhances the interaction of CREB1 with TAF4. Regulates gluconeogenesis as a component of the LKB1/AMPK/TORC2 signaling pathway. Regulates the expression of specific genes such as the steroidogenic gene, StAR. Potent coactivator of PPARGC1A and inducer of mitochondrial biogenesis in muscle cells. Also coactivator for TAX activation of the human T-cell leukemia virus type 1 (HTLV-1) long terminal repeats (LTR). The chain is CREB-regulated transcription coactivator 2 (CRTC2) from Homo sapiens (Human).